Here is a 311-residue protein sequence, read N- to C-terminus: MGLHSELKLAVPWGHIALKVWGSQKNPPVLCLHGWLDNANSFDRLIPLLPQDFCYMAMDFGGHGLSSHYNPGLPYYQQNFVSEVRRVATAFKWNQFTLLGHSFGGCVGGTFACMFPEMVDKLILLDSTPFFLDSNEMENILTYRRRNIEHTLQVEASQKKSLRAVSPEEMLQGFLNNNSHLDKDCGELILQRGTTKVDAGLVLNRDRRISWPENSFDFVSKEMFVHSAKSLQASVLMIKALQGYYDVRRANDADKAPMHFMVDTLRSTLKERFQFVEVPGNHYIHMNKPQVVAGVVGPFLQGLQRMTSARL.

The AB hydrolase-1 domain occupies 27–227; it reads PPVLCLHGWL…FVSKEMFVHS (201 aa). The active site involves Ser102. Ser210 bears the Phosphoserine mark.

Belongs to the AB hydrolase superfamily. As to expression, ubiquitous. High protein expression in skeletal and cardiac muscle.

The protein localises to the cytoplasm. Its subcellular location is the perinuclear region. The protein resides in the peroxisome. Functionally, probable serine hydrolase. May be related to cell muscle hypertrophy. The chain is Serine hydrolase-like protein (Serhl) from Mus musculus (Mouse).